The chain runs to 93 residues: SH3 domain-binding glutamic acid-rich-like protein 3 (93 aa).

An N-acetylserine modification is found at Ser2. A Glutaredoxin domain is found at 2–93 (SGLRVYSTSV…DTLQEFLKLA (92 aa)). Thr9 is a glycosylation site (O-linked (GalNAc...) threonine).

It belongs to the SH3BGR family. Homodimer. Interacts with MYO1C (via its IQ motifs); the interaction is dependent on calcium and takes place at membrane ruffles. Post-translationally, may be glycosylated.

The protein resides in the cytoplasm. It localises to the cytosol. Its subcellular location is the cell projection. It is found in the ruffle membrane. The protein localises to the nucleus. Its function is as follows. Could act as a modulator of glutaredoxin biological activity. May play a role in cytoskeleton organization. The sequence is that of SH3 domain-binding glutamic acid-rich-like protein 3 (Sh3bgrl3) from Mus musculus (Mouse).